Consider the following 624-residue polypeptide: Pentatricopeptide repeat-containing protein At4g31070, mitochondrial (624 aa).

The N-terminal 15 residues, 1 to 15 (MRWVKLGRRVIMSRA), are a transit peptide targeting the mitochondrion. 14 PPR repeats span residues 56–91 (FTAI…GADC), 92–122 (DTVV…MLHR), 123–157 (DTVS…GFIP), 158–192 (KSEL…DERM), 195–225 (SVLL…MEVK), 226–260 (NEVS…NLRP), 261–296 (NRVT…GCHA), 297–327 (DERL…SKVR), 328–362 (DVVM…GIEA), 363–397 (NSVT…GFMS), 398–428 (HILL…LTEK), 429–463 (DLVS…GHEV), 464–498 (DDMA…HMPV), and 499–529 (TLEH…MPMK). Residues 534 to 610 (IWSSLLSACE…CYGFSKIEPE (77 aa)) are type E motif.

Belongs to the PPR family. PCMP-E subfamily.

The protein resides in the mitochondrion. The protein is Pentatricopeptide repeat-containing protein At4g31070, mitochondrial (PCMP-E7) of Arabidopsis thaliana (Mouse-ear cress).